Here is a 532-residue protein sequence, read N- to C-terminus: uncharacterized protein (532 aa).

A run of 6 helical transmembrane segments spans residues 7–26, 30–52, 59–77, 87–109, 116–134, and 139–161; these read HSSYFSLFLIVALGFMLGRI, GLSLDVSAVIFIALLFGHFGVII, FGLVLFIFTIGIQAGPGFF, LILITMLIICSACLTAVGLKYAF, VVGLIAGALTSTPGLAVAI, and SPLASIAYGIAYPFGVIGVILFV. 2 RCK C-terminal domains span residues 179-262 and 263-346; these read LEIE…LIGE and REEG…LLGN. 6 helical membrane-spanning segments follow: residues 356–376, 386–408, 421–440, 445–467, 474–496, and 506–528; these read FFPIAMGIVLGVLFGKLNISF, LTGGVLMVALVLSAVGKTGPIIW, LGLLLFLAEVGTSAGKNLVA, SGLLMFGVGAAITVVPMLVAVIV, INILDLLGTITGGMTSTPGLAAA, and SVAYATVYPIAMVFLILFIQVIS.

It belongs to the AAE transporter (TC 2.A.81) family.

It localises to the cell membrane. This is an uncharacterized protein from Bacteroides thetaiotaomicron (strain ATCC 29148 / DSM 2079 / JCM 5827 / CCUG 10774 / NCTC 10582 / VPI-5482 / E50).